We begin with the raw amino-acid sequence, 76 residues long: Exodeoxyribonuclease 7 small subunit (76 aa).

It belongs to the XseB family. Heterooligomer composed of large and small subunits.

It localises to the cytoplasm. The enzyme catalyses Exonucleolytic cleavage in either 5'- to 3'- or 3'- to 5'-direction to yield nucleoside 5'-phosphates.. In terms of biological role, bidirectionally degrades single-stranded DNA into large acid-insoluble oligonucleotides, which are then degraded further into small acid-soluble oligonucleotides. The chain is Exodeoxyribonuclease 7 small subunit from Methylococcus capsulatus (strain ATCC 33009 / NCIMB 11132 / Bath).